Reading from the N-terminus, the 432-residue chain is Pachytene checkpoint protein 2 homolog (432 aa).

Position 1 is an N-acetylmethionine (Met-1). 179-186 (GPPGTGKT) serves as a coordination point for ATP.

This sequence belongs to the AAA ATPase family. PCH2 subfamily. In terms of assembly, specifically interacts with the ligand binding domain of the thyroid receptor (TR). This interaction does not require the presence of thyroid hormone for its interaction. Interacts with HPV16 E1. Interacts with proteasome subunit PSMA8; to participate in meiosis progression during spermatogenesis.

Plays a key role in chromosome recombination and chromosome structure development during meiosis. Required at early steps in meiotic recombination that leads to non-crossovers pathways. Also needed for efficient completion of homologous synapsis by influencing crossover distribution along the chromosomes affecting both crossovers and non-crossovers pathways. Also required for development of higher-order chromosome structures and is needed for synaptonemal-complex formation. In males, required for efficient synapsis of the sex chromosomes and for sex body formation. Promotes early steps of the DNA double-strand breaks (DSBs) repair process upstream of the assembly of RAD51 complexes. Required for depletion of HORMAD1 and HORMAD2 from synapsed chromosomes. Plays a role in mitotic spindle assembly checkpoint (SAC) activation. This is Pachytene checkpoint protein 2 homolog (TRIP13) from Homo sapiens (Human).